We begin with the raw amino-acid sequence, 452 residues long: MSVKWKKTGKTTGELTFDISKDEIKLGLDQAFRRVKKNLHVPGFRKGHVSRVIFDQYYGEEALYEDALNIVLPNAYSAAVKEAGIAAVGQPQIVPVSMDKDKDWTMKATVTVEPEVKLGDYKGIEVPKQNTRVYQKDVDAELDKRREQNAELVLKKGKSAKGDTVTIDYKGTIDGKEFEGGSAENYSLELGSGAFIPGFEDQLIGHEAGDDVDVVVTFPKDYGAKDLAGKEAHFATKIHEVKSKQLPKLDDEFAKDVDDSVDTLDELKDKIKKQLKDQKEQAANDAIQEAAIEGAVKNATVDEIPDAMIQDDVDTQLNQYLGNMQRQGIDPQTYYKLTNTNEQQLRSQFAKNAAERVKTNLVLEAIVEKEGLKATKEEIDKEIKDLAAEYNMDEKTIRNTLSDDMLSHDITVRKAMDLVTDNAKQVAKAKLEAKEAEEAEDKEEAEDKKENK.

Positions 162-247 (GDTVTIDYKG…IHEVKSKQLP (86 aa)) constitute a PPIase FKBP-type domain. Residues 427-452 (AKAKLEAKEAEEAEDKEEAEDKKENK) form a disordered region.

It belongs to the FKBP-type PPIase family. Tig subfamily.

It is found in the cytoplasm. It catalyses the reaction [protein]-peptidylproline (omega=180) = [protein]-peptidylproline (omega=0). Involved in protein export. Acts as a chaperone by maintaining the newly synthesized protein in an open conformation. Functions as a peptidyl-prolyl cis-trans isomerase. The polypeptide is Trigger factor (Lactobacillus helveticus (strain DPC 4571)).